Consider the following 348-residue polypeptide: NADH-quinone oxidoreductase subunit H (348 aa).

Helical transmembrane passes span 21–41 (IAGI…VIYV), 87–107 (GIFL…WAVI), 120–140 (VGLL…VMAG), 166–186 (IGFI…SEIV), 195–215 (GIVN…LFFI), 258–278 (NILL…LPPI), 288–308 (GFLW…WIWA), and 325–345 (VFLP…MATG).

Belongs to the complex I subunit 1 family. NDH-1 is composed of 14 different subunits. Subunits NuoA, H, J, K, L, M, N constitute the membrane sector of the complex.

The protein resides in the cell inner membrane. It carries out the reaction a quinone + NADH + 5 H(+)(in) = a quinol + NAD(+) + 4 H(+)(out). NDH-1 shuttles electrons from NADH, via FMN and iron-sulfur (Fe-S) centers, to quinones in the respiratory chain. The immediate electron acceptor for the enzyme in this species is believed to be ubiquinone. Couples the redox reaction to proton translocation (for every two electrons transferred, four hydrogen ions are translocated across the cytoplasmic membrane), and thus conserves the redox energy in a proton gradient. This subunit may bind ubiquinone. This chain is NADH-quinone oxidoreductase subunit H, found in Erythrobacter litoralis (strain HTCC2594).